Consider the following 198-residue polypeptide: dTTP/UTP pyrophosphatase (198 aa).

Residue aspartate 69 is the Proton acceptor of the active site.

The protein belongs to the Maf family. YhdE subfamily. A divalent metal cation serves as cofactor.

It is found in the cytoplasm. The enzyme catalyses dTTP + H2O = dTMP + diphosphate + H(+). It catalyses the reaction UTP + H2O = UMP + diphosphate + H(+). In terms of biological role, nucleoside triphosphate pyrophosphatase that hydrolyzes dTTP and UTP. May have a dual role in cell division arrest and in preventing the incorporation of modified nucleotides into cellular nucleic acids. This is dTTP/UTP pyrophosphatase from Idiomarina loihiensis (strain ATCC BAA-735 / DSM 15497 / L2-TR).